A 577-amino-acid polypeptide reads, in one-letter code: Arginine--tRNA ligase (577 aa).

Residues 122–132 (PNVAKEMHVGH) carry the 'HIGH' region motif.

The protein belongs to the class-I aminoacyl-tRNA synthetase family. In terms of assembly, monomer.

It is found in the cytoplasm. It carries out the reaction tRNA(Arg) + L-arginine + ATP = L-arginyl-tRNA(Arg) + AMP + diphosphate. The protein is Arginine--tRNA ligase of Escherichia fergusonii (strain ATCC 35469 / DSM 13698 / CCUG 18766 / IAM 14443 / JCM 21226 / LMG 7866 / NBRC 102419 / NCTC 12128 / CDC 0568-73).